Consider the following 448-residue polypeptide: Protein arginine N-methyltransferase 2 (448 aa).

Interaction with ESR1 regions lie at residues 1-289 and 145-287; these read MEAP…SALK and KESL…NLSA. Residues 42–101 enclose the SH3 domain; that stretch reads LQPEEFVAIADYTATDETQLSFLRGEKILILRQTTADWWWGERAGCCGYIPANHLGKQLE. Asymmetric dimethylarginine is present on residues R73 and R84. The tract at residues 95 to 219 is interaction with RB1; sequence HLGKQLEEYD…DVVLPEKVDV (125 aa). Residues 111–414 enclose the SAM-dependent MTase PRMT-type domain; that stretch reads DEEYFDSYGT…CCVTKKSGME (304 aa). H124, R133, G157, E180, and E209 together coordinate S-adenosyl-L-methionine. Residues E223 and E232 contribute to the active site.

The protein belongs to the class I-like SAM-binding methyltransferase superfamily. Protein arginine N-methyltransferase family. As to quaternary structure, self-associates. Interacts with HNRNPUL1. Interacts with NFKBIA. Interacts with NCOA6 coactivator. Interacts (via SH3 domain) with PRMT8. Interacts with AR. Interacts with ESR1, ESR2, PGR, PPARG, RARA, RXRA and THRB. Interacts with RB1 and E2F1. Expressed in liver, pancreas, lung, brain, skeletal muscle, heart, muscle and fat.

The protein localises to the cytoplasm. It is found in the nucleus. It catalyses the reaction L-arginyl-[protein] + 2 S-adenosyl-L-methionine = N(omega),N(omega)-dimethyl-L-arginyl-[protein] + 2 S-adenosyl-L-homocysteine + 2 H(+). Its function is as follows. Arginine methyltransferase that methylates the guanidino nitrogens of arginyl residues in proteins such as STAT3, FBL, histone H4. May inhibit NF-kappa-B transcription, and promote apoptosis. Represses E2F1 transcriptional activity (in a RB1-dependent manner). Has a negative regulation effect on G1 to S transition of mitotic cell cycle. Involved in growth regulation. Acts as a coactivator (with NCOA2) of the androgen receptor (AR)-mediated transactivation. Acts as a coactivator (with estrogen) of estrogen receptor (ER)-mediated transactivation. Enhances PGR, PPARG, RARA-mediated transactivation. The polypeptide is Protein arginine N-methyltransferase 2 (Prmt2) (Mus musculus (Mouse)).